A 777-amino-acid polypeptide reads, in one-letter code: Rho guanine nucleotide exchange factor 38 (777 aa).

Thr-34 is modified (phosphothreonine). Residues 35–72 (DTVVESSVSGDHSGTLRRSQSDRTEYNQKLQEKMTPQG) are disordered. Over residues 37–52 (VVESSVSGDHSGTLRR) the composition is skewed to polar residues. Residues 53 to 66 (SQSDRTEYNQKLQE) show a composition bias toward basic and acidic residues. Positions 94 to 285 (KREKIIKELI…KDINVNINEL (192 aa)) constitute a DH domain. Residues 327-536 (LKILTRGESQ…QNQVLEEIQN (210 aa)) form the BAR domain. The SH3 1 domain maps to 582–645 (SAEELYQAKR…YSSFLKPYNP (64 aa)). The disordered stretch occupies residues 673-694 (PASDSVTGTSESSIGDSSSSLS). Residues 679-694 (TGTSESSIGDSSSSLS) are compositionally biased toward low complexity. The SH3 2 domain occupies 713–776 (VDEQIFYAVH…PANYLGKMTY (64 aa)).

Functionally, may act as a guanine-nucleotide releasing factor. This is Rho guanine nucleotide exchange factor 38 (ARHGEF38) from Homo sapiens (Human).